The chain runs to 467 residues: Glutamate--tRNA ligase (467 aa).

The 'HIGH' region motif lies at 9–19 (PSPTGYLHIGG). The 'KMSKS' region motif lies at 237 to 241 (KLSKR). Lysine 240 lines the ATP pocket.

Belongs to the class-I aminoacyl-tRNA synthetase family. Glutamate--tRNA ligase type 1 subfamily. In terms of assembly, monomer.

The protein localises to the cytoplasm. It catalyses the reaction tRNA(Glu) + L-glutamate + ATP = L-glutamyl-tRNA(Glu) + AMP + diphosphate. Functionally, catalyzes the attachment of glutamate to tRNA(Glu) in a two-step reaction: glutamate is first activated by ATP to form Glu-AMP and then transferred to the acceptor end of tRNA(Glu). The protein is Glutamate--tRNA ligase of Xanthomonas euvesicatoria pv. vesicatoria (strain 85-10) (Xanthomonas campestris pv. vesicatoria).